Reading from the N-terminus, the 246-residue chain is UDP-N-acetyl-D-mannosaminuronic acid transferase (246 aa).

It belongs to the glycosyltransferase 26 family.

The catalysed reaction is UDP-N-acetyl-alpha-D-mannosaminouronate + N-acetyl-alpha-D-glucosaminyl-di-trans,octa-cis-undecaprenyl diphosphate = beta-D-ManNAcA-(1-&gt;4)-alpha-D-GlcNAc-di-trans,octa-cis-undecaprenyl diphosphate + UDP + H(+). It functions in the pathway bacterial outer membrane biogenesis; enterobacterial common antigen biosynthesis. Functionally, catalyzes the synthesis of Und-PP-GlcNAc-ManNAcA (Lipid II), the second lipid-linked intermediate involved in enterobacterial common antigen (ECA) synthesis. This chain is UDP-N-acetyl-D-mannosaminuronic acid transferase, found in Salmonella schwarzengrund (strain CVM19633).